We begin with the raw amino-acid sequence, 102 residues long: Small ribosomal subunit protein uS10 (102 aa).

It belongs to the universal ribosomal protein uS10 family. Part of the 30S ribosomal subunit.

Functionally, involved in the binding of tRNA to the ribosomes. The chain is Small ribosomal subunit protein uS10 from Cenarchaeum symbiosum (strain A).